The chain runs to 332 residues: Glyceraldehyde-3-phosphate dehydrogenase (332 aa).

NAD(+) is bound by residues 12-13, aspartate 34, lysine 78, and threonine 120; that span reads RI. D-glyceraldehyde 3-phosphate contacts are provided by residues 149 to 151, threonine 180, 209 to 210, and arginine 232; these read SCT and TG. Cysteine 150 acts as the Nucleophile in catalysis. An NAD(+)-binding site is contributed by asparagine 314.

This sequence belongs to the glyceraldehyde-3-phosphate dehydrogenase family. In terms of assembly, homotetramer.

It localises to the cytoplasm. The catalysed reaction is D-glyceraldehyde 3-phosphate + phosphate + NAD(+) = (2R)-3-phospho-glyceroyl phosphate + NADH + H(+). The protein operates within carbohydrate degradation; glycolysis; pyruvate from D-glyceraldehyde 3-phosphate: step 1/5. Catalyzes the oxidative phosphorylation of glyceraldehyde 3-phosphate (G3P) to 1,3-bisphosphoglycerate (BPG) using the cofactor NAD. The first reaction step involves the formation of a hemiacetal intermediate between G3P and a cysteine residue, and this hemiacetal intermediate is then oxidized to a thioester, with concomitant reduction of NAD to NADH. The reduced NADH is then exchanged with the second NAD, and the thioester is attacked by a nucleophilic inorganic phosphate to produce BPG. The polypeptide is Glyceraldehyde-3-phosphate dehydrogenase (gapA) (Buchnera aphidicola subsp. Schizaphis graminum (strain Sg)).